Here is a 313-residue protein sequence, read N- to C-terminus: uncharacterized protein (313 aa).

6 helical membrane-spanning segments follow: residues 16 to 36 (AGTWVMIGILGLTMVGFAFLA), 106 to 126 (FTILTGLFTIIIAAGIVANEF), 155 to 175 (FGLLLLLILFIGSTLLGLIFF), 208 to 228 (LSESVSALMVATMAFMLSAVF), 233 to 253 (LAVGFSIFLLVAGTTATAFIA), and 286 to 306 (FSLVMLAIYFIIFLLLAFGIF).

The protein localises to the cell membrane. This is an uncharacterized protein from Bacillus subtilis (strain 168).